Here is an 898-residue protein sequence, read N- to C-terminus: Chaperone protein ClpB 1 (898 aa).

The Clp R domain occupies 6–148; that stretch reads PTKFTEQAWD…ELAIKAIRGS (143 aa). Repeat regions lie at residues 9–74 and 85–148; these read FTEQ…TNRQ and LGRS…IRGS. Residues 161 to 344 are NBD1; the sequence is EALDKYGRDL…RRFQQVYVKQ (184 aa). 208–215 contacts ATP; the sequence is GEPGVGKT. The linker stretch occupies residues 345-560; the sequence is PSVDDTISIL…IAEIVAGWTG (216 aa). The stretch at 395–536 forms a coiled coil; sequence IDLVDEAAAR…KESKLLEIQG (142 aa). The tract at residues 570-781 is NBD2; that stretch reads ERQKLLQLEG…RIDDLIIFHT (212 aa). An ATP-binding site is contributed by 620-627; it reads GPTGVGKT. Positions 782 to 898 are C-terminal; it reads LKRDELRRIV…TAVEVEVLSS (117 aa).

It belongs to the ClpA/ClpB family. In terms of assembly, homohexamer. The oligomerization is ATP-dependent.

The protein localises to the cytoplasm. Its function is as follows. Part of a stress-induced multi-chaperone system, it is involved in the recovery of the cell from heat-induced damage, in cooperation with DnaK, DnaJ and GrpE. Acts before DnaK, in the processing of protein aggregates. Protein binding stimulates the ATPase activity; ATP hydrolysis unfolds the denatured protein aggregates, which probably helps expose new hydrophobic binding sites on the surface of ClpB-bound aggregates, contributing to the solubilization and refolding of denatured protein aggregates by DnaK. This Synechocystis sp. (strain ATCC 27184 / PCC 6803 / Kazusa) protein is Chaperone protein ClpB 1 (clpB1).